Here is a 209-residue protein sequence, read N- to C-terminus: Ribosome maturation factor RimM (209 aa).

The PRC barrel domain maps to 103-178 (EGATYVSDLV…RIEMVLPQGM (76 aa)). A disordered region spans residues 184-209 (PLSKAEKERQKSEADETREAGERRKR). The span at 187–209 (KAEKERQKSEADETREAGERRKR) shows a compositional bias: basic and acidic residues.

Belongs to the RimM family. Binds ribosomal protein uS19.

Its subcellular location is the cytoplasm. In terms of biological role, an accessory protein needed during the final step in the assembly of 30S ribosomal subunit, possibly for assembly of the head region. Essential for efficient processing of 16S rRNA. May be needed both before and after RbfA during the maturation of 16S rRNA. It has affinity for free ribosomal 30S subunits but not for 70S ribosomes. In Koribacter versatilis (strain Ellin345), this protein is Ribosome maturation factor RimM.